Consider the following 166-residue polypeptide: Peptide methionine sulfoxide reductase MsrA (166 aa).

C11 is an active-site residue.

This sequence belongs to the MsrA Met sulfoxide reductase family.

It carries out the reaction L-methionyl-[protein] + [thioredoxin]-disulfide + H2O = L-methionyl-(S)-S-oxide-[protein] + [thioredoxin]-dithiol. The catalysed reaction is [thioredoxin]-disulfide + L-methionine + H2O = L-methionine (S)-S-oxide + [thioredoxin]-dithiol. Its function is as follows. Has an important function as a repair enzyme for proteins that have been inactivated by oxidation. Catalyzes the reversible oxidation-reduction of methionine sulfoxide in proteins to methionine. The chain is Peptide methionine sulfoxide reductase MsrA from Mycoplasmopsis pulmonis (strain UAB CTIP) (Mycoplasma pulmonis).